Reading from the N-terminus, the 1257-residue chain is Stromal processing peptidase, chloroplastic (1257 aa).

The transit peptide at 1 to 142 directs the protein to the chloroplast; that stretch reads MAASTSTSSL…ASVKRVQLPH (142 aa). His-236 serves as a coordination point for Zn(2+). Residue Glu-239 is the Proton acceptor of the active site. Residue His-240 participates in Zn(2+) binding. Residue Glu-309 is part of the active site. Glu-316 is a Zn(2+) binding site. The tract at residues 1233-1257 is disordered; the sequence is EEAGEGYPGVLPMGRGLSTMTRPTT.

The protein belongs to the peptidase M16 family. It depends on Zn(2+) as a cofactor.

Its subcellular location is the plastid. It is found in the chloroplast stroma. Its function is as follows. Cleaves presequences (transit peptides) from chloroplastic protein precursors. Initially recognizes a precursor by binding to the C-terminus of its transit peptide and then removes the transit peptide in a single endoproteolytic step. In a next step, pursues the cleavage of transit peptide to a subfragment form. The sequence is that of Stromal processing peptidase, chloroplastic from Pisum sativum (Garden pea).